Consider the following 198-residue polypeptide: Peroxiredoxin-2 (198 aa).

The residue at position 2 (Ala-2) is an N-acetylalanine. The 159-residue stretch at 6–164 (AQIGKSAPDF…ALRLVQAFQY (159 aa)) folds into the Thioredoxin domain. At Ser-11 the chain carries Phosphoserine. Catalysis depends on Cys-51, which acts as the Cysteine sulfenic acid (-SOH) intermediate. Ser-112 is modified (phosphoserine). At Thr-182 the chain carries Phosphothreonine. Lys-196 is modified (N6-acetyllysine).

This sequence belongs to the peroxiredoxin family. AhpC/Prx1 subfamily. As to quaternary structure, homodimer; disulfide-linked, upon oxidation. 5 homodimers assemble to form a ring-like decamer. Interacts with TIPIN. In terms of processing, the enzyme can be inactivated by further oxidation of the cysteine sulfenic acid (C(P)-SOH) to sulphinic acid (C(P)-SO2H) instead of its condensation to a disulfide bond. It can be reactivated by forming a transient disulfide bond with sulfiredoxin SRXN1, which reduces the cysteine sulfinic acid in an ATP- and Mg-dependent manner. Acetylation increases resistance to transition to high molecular-mass complexes. Deacetylated by HDAC6 which decreases reducing activity. In terms of tissue distribution, widely expressed with highest levels in bone marrow. High levels also found in heart, brain, kidney and skeletal muscle. Lower levels in liver, lung and thymus.

It localises to the cytoplasm. The enzyme catalyses a hydroperoxide + [thioredoxin]-dithiol = an alcohol + [thioredoxin]-disulfide + H2O. Its function is as follows. Thiol-specific peroxidase that catalyzes the reduction of hydrogen peroxide and organic hydroperoxides to water and alcohols, respectively. Plays a role in cell protection against oxidative stress by detoxifying peroxides and as sensor of hydrogen peroxide-mediated signaling events. Might participate in the signaling cascades of growth factors and tumor necrosis factor-alpha by regulating the intracellular concentrations of H(2)O(2). The sequence is that of Peroxiredoxin-2 (Prdx2) from Mus musculus (Mouse).